A 149-amino-acid polypeptide reads, in one-letter code: Cytochrome c' (149 aa).

Residues 1–19 (MRRVLLATLMAALPAAAMA) form the signal peptide. Positions 29, 89, 90, 138, 141, and 142 each coordinate heme c.

Monomer and homodimer. Post-translationally, binds 1 heme c group covalently per subunit.

Functionally, cytochrome c' is the most widely occurring bacterial c-type cytochrome. Cytochromes c' are high-spin proteins and the heme has no sixth ligand. Their exact function is not known. The chain is Cytochrome c' (cycP) from Cereibacter sphaeroides (strain ATCC 17023 / DSM 158 / JCM 6121 / CCUG 31486 / LMG 2827 / NBRC 12203 / NCIMB 8253 / ATH 2.4.1.) (Rhodobacter sphaeroides).